A 1378-amino-acid chain; its full sequence is DNA-directed RNA polymerase subunit beta (1378 aa).

This sequence belongs to the RNA polymerase beta chain family. The RNAP catalytic core consists of 2 alpha, 1 beta, 1 beta' and 1 omega subunit. When a sigma factor is associated with the core the holoenzyme is formed, which can initiate transcription.

It catalyses the reaction RNA(n) + a ribonucleoside 5'-triphosphate = RNA(n+1) + diphosphate. Its function is as follows. DNA-dependent RNA polymerase catalyzes the transcription of DNA into RNA using the four ribonucleoside triphosphates as substrates. This chain is DNA-directed RNA polymerase subunit beta, found in Ruegeria pomeroyi (strain ATCC 700808 / DSM 15171 / DSS-3) (Silicibacter pomeroyi).